Here is a 630-residue protein sequence, read N- to C-terminus: Zinc finger CW-type PWWP domain protein 1 (630 aa).

Disordered regions lie at residues 1-99 (MMAA…TSAE) and 130-184 (LDEE…TEPS). Composition is skewed to basic and acidic residues over residues 26-40 (LHSE…KEDA), 59-81 (LKKE…KLKA), and 141-152 (TDKKDADPEKVI). The segment at 241–295 (FGHCVIWVQCSSPKCEKWRQLRGNIDPSVLPDDWSCDQNPDPNYNRCDIPEESWA) adopts a CW-type zinc-finger fold. Residues C250, C255, C276, and C287 each coordinate Zn(2+). One can recognise a PWWP domain in the interval 308 to 374 (PGSIIWAKQY…VRMLKNFQEL (67 aa)). Residues 430-595 (DLTLCESNNP…FPPDDDCSSD (166 aa)) are disordered. Residues 435–465 (ESNNPESCLEKEEKDLEEEKEEEEEKKDPTL) adopt a coiled-coil conformation. Over residues 449–459 (DLEEEKEEEEE) the composition is skewed to acidic residues. Basic and acidic residues predominate over residues 514–527 (GKEEQGNSDLDHPV). S619 carries the phosphoserine modification.

As to expression, testis (at protein level). Expressed in thymus, brain, lung, ovary, oviduct and uterus.

It is found in the nucleus. It localises to the chromosome. Dual histone methylation reader specific for PRDM9-catalyzed histone marks (H3K4me3 and H3K36me3) that facilitates the repair of PRDM9-induced meiotic double-strand breaks (DSBs). Essential for male fertility and spermatogenesis. Required for meiosis prophase I progression in male but not in female germ cells. This Mus musculus (Mouse) protein is Zinc finger CW-type PWWP domain protein 1 (Zcwpw1).